The chain runs to 136 residues: Large ribosomal subunit protein uL16 (136 aa).

This sequence belongs to the universal ribosomal protein uL16 family. Part of the 50S ribosomal subunit.

In terms of biological role, binds 23S rRNA and is also seen to make contacts with the A and possibly P site tRNAs. In Shewanella loihica (strain ATCC BAA-1088 / PV-4), this protein is Large ribosomal subunit protein uL16.